We begin with the raw amino-acid sequence, 111 residues long: MAKVYANANKVAARYVETRDAVRDERNKVTRRAKANLARQNSTTRITDEGYFPATITEQDGDVDFHTILNAPNALALEFGHAPSGFFAGTDTKPPEATYILTRAAIGGTVS.

This is Gene 21 protein (21) from Mycobacterium (Mycobacteriophage L5).